The following is a 22-amino-acid chain: thr operon leader peptide (22 aa).

This sequence belongs to the thr operon leader peptide family.

Its function is as follows. This protein is involved in control of the biosynthesis of threonine. This chain is thr operon leader peptide, found in Yersinia pestis bv. Antiqua (strain Antiqua).